A 490-amino-acid chain; its full sequence is Betaine aldehyde dehydrogenase (490 aa).

2 residues coordinate K(+): Ile27 and Asp93. 150–152 lines the NAD(+) pocket; sequence GAW. The Charge relay system role is filled by Lys162. 176 to 179 contacts NAD(+); sequence KPSE. Val180 contacts K(+). 230–233 serves as a coordination point for NAD(+); the sequence is GTDT. Leu246 lines the K(+) pocket. The Proton acceptor role is filled by Glu252. NAD(+) is bound by residues Gly254, Cys286, and Glu387. Cys286 functions as the Nucleophile in the catalytic mechanism. A Cysteine sulfenic acid (-SOH) modification is found at Cys286. K(+) contacts are provided by Lys457 and Gly460. Glu464 functions as the Charge relay system in the catalytic mechanism.

The protein belongs to the aldehyde dehydrogenase family. In terms of assembly, dimer of dimers. K(+) serves as cofactor.

It catalyses the reaction betaine aldehyde + NAD(+) + H2O = glycine betaine + NADH + 2 H(+). Its pathway is amine and polyamine biosynthesis; betaine biosynthesis via choline pathway; betaine from betaine aldehyde: step 1/1. In terms of biological role, involved in the biosynthesis of the osmoprotectant glycine betaine. Catalyzes the irreversible oxidation of betaine aldehyde to the corresponding acid. The chain is Betaine aldehyde dehydrogenase from Pseudomonas fluorescens (strain ATCC BAA-477 / NRRL B-23932 / Pf-5).